The following is a 327-amino-acid chain: Phenylalanine--tRNA ligase alpha subunit (327 aa).

Glutamate 252 is a Mg(2+) binding site.

Belongs to the class-II aminoacyl-tRNA synthetase family. Phe-tRNA synthetase alpha subunit type 1 subfamily. Tetramer of two alpha and two beta subunits. The cofactor is Mg(2+).

The protein resides in the cytoplasm. The enzyme catalyses tRNA(Phe) + L-phenylalanine + ATP = L-phenylalanyl-tRNA(Phe) + AMP + diphosphate + H(+). The sequence is that of Phenylalanine--tRNA ligase alpha subunit from Klebsiella pneumoniae (strain 342).